A 338-amino-acid polypeptide reads, in one-letter code: Methionine aminopeptidase 1D, mitochondrial (338 aa).

Residues Met1–Arg47 constitute a mitochondrion transit peptide. A substrate-binding site is contributed by His164. A divalent metal cation is bound by residues Asp181, Asp192, and His255. His262 contacts substrate. Positions 287 and 318 each coordinate a divalent metal cation.

It belongs to the peptidase M24A family. Methionine aminopeptidase type 1 subfamily. The cofactor is Co(2+). It depends on Zn(2+) as a cofactor. Requires Mn(2+) as cofactor. Fe(2+) is required as a cofactor.

Its subcellular location is the mitochondrion. It catalyses the reaction Release of N-terminal amino acids, preferentially methionine, from peptides and arylamides.. Removes the N-terminal methionine from nascent proteins. The N-terminal methionine is often cleaved when the second residue in the primary sequence is small and uncharged (Met-Ala-, Cys, Gly, Pro, Ser, Thr, or Val). Requires deformylation of the N(alpha)-formylated initiator methionine before it can be hydrolyzed. The sequence is that of Methionine aminopeptidase 1D, mitochondrial (metap1d) from Danio rerio (Zebrafish).